A 125-amino-acid chain; its full sequence is MVLIIEIIKIGQIGPIGQRGQSGQRGQSGQRGQSGQIGQSGQSGQSGQSGQSGQIGQIGQIGQIGQIGQIGQIGQIGQARRTGRTGRTVHRRMLQASSSFNISPDISICRRATRNMGEEERPLGC.

23 G-Q-I/R/S repeats span residues 11–13 (GQI), 14–16 (GPI), 17–19 (GQR), 20–22 (GQS), 23–25 (GQR), 26–28 (GQS), 29–31 (GQR), 32–34 (GQS), 35–37 (GQI), 38–40 (GQS), 41–43 (GQS), 44–46 (GQS), 47–49 (GQS), 50–52 (GQS), 53–55 (GQI), 56–58 (GQI), 59–61 (GQI), 62–64 (GQI), 65–67 (GQI), 68–70 (GQI), 71–73 (GQI), 74–76 (GQI), and 77–79 (GQA). Residues 11–79 (GQIGPIGQRG…IGQIGQIGQA (69 aa)) form a 23 X 3 AA approximate tandem repeats of G-Q-I/R/S region. The interval 15–57 (PIGQRGQSGQRGQSGQRGQSGQIGQSGQSGQSGQSGQSGQIGQ) is disordered.

Its subcellular location is the secreted. Its function is as follows. Hypoxia responsive morphology factor that modulates the expression of the subtelomeric hrmA-associated cluster (HAC) containing genes that alter the hyphal surface (such as reduced total chitin or increased beta-glucan exposure) and perturb inter-hyphal interactions within the developing biofilms, resulting in a loss of vertically aligned polarized growing filaments. Consequently, this hypoxia-typic morphotype (called H-MORPH) with altered biofilm architecture leads to increased hypoxia fitness, increased host inflammation, rapid disease progression, and mortality in a murine model of invasive aspergillosis. GcnA is directly involved in the reduction total surface chitin and the increase beta-glucan exposure, and mediates the detachment of the extracellular matrix and especially of its component galactosaminogalactan (GAG). The chain is Subtelomeric hrmA-associated cluster protein cgnA from Aspergillus fumigatus (strain CBS 144.89 / FGSC A1163 / CEA10) (Neosartorya fumigata).